The following is a 210-amino-acid chain: Thymidylate kinase (210 aa).

10–17 serves as a coordination point for ATP; that stretch reads GPEGAGKS.

Belongs to the thymidylate kinase family.

The catalysed reaction is dTMP + ATP = dTDP + ADP. Its function is as follows. Phosphorylation of dTMP to form dTDP in both de novo and salvage pathways of dTTP synthesis. This is Thymidylate kinase from Pseudomonas aeruginosa (strain UCBPP-PA14).